A 324-amino-acid polypeptide reads, in one-letter code: Probable fructokinase-5 (324 aa).

It belongs to the carbohydrate kinase PfkB family.

It catalyses the reaction D-fructose + ATP = D-fructose 6-phosphate + ADP + H(+). It participates in glycan biosynthesis; starch biosynthesis. Its function is as follows. May play an important role in maintaining the flux of carbon towards starch formation. The protein is Probable fructokinase-5 of Arabidopsis thaliana (Mouse-ear cress).